Reading from the N-terminus, the 940-residue chain is Isoleucine--tRNA ligase (940 aa).

Residues 58–68 (PYANGDIHIGH) carry the 'HIGH' region motif. Residue glutamate 564 coordinates L-isoleucyl-5'-AMP. The 'KMSKS' region signature appears at 605–609 (KMSKS). Position 608 (lysine 608) interacts with ATP. Positions 903, 906, 923, and 926 each coordinate Zn(2+).

Belongs to the class-I aminoacyl-tRNA synthetase family. IleS type 1 subfamily. Monomer. It depends on Zn(2+) as a cofactor.

It is found in the cytoplasm. It carries out the reaction tRNA(Ile) + L-isoleucine + ATP = L-isoleucyl-tRNA(Ile) + AMP + diphosphate. Functionally, catalyzes the attachment of isoleucine to tRNA(Ile). As IleRS can inadvertently accommodate and process structurally similar amino acids such as valine, to avoid such errors it has two additional distinct tRNA(Ile)-dependent editing activities. One activity is designated as 'pretransfer' editing and involves the hydrolysis of activated Val-AMP. The other activity is designated 'posttransfer' editing and involves deacylation of mischarged Val-tRNA(Ile). This is Isoleucine--tRNA ligase from Shewanella halifaxensis (strain HAW-EB4).